The sequence spans 382 residues: Dual-specificity RNA methyltransferase RlmN (382 aa).

The active-site Proton acceptor is glutamate 96. In terms of domain architecture, Radical SAM core spans 102–342 (QGKRGTLCVS…VRTTRGEDID (241 aa)). Cysteine 109 and cysteine 345 are disulfide-bonded. 3 residues coordinate [4Fe-4S] cluster: cysteine 116, cysteine 120, and cysteine 123. S-adenosyl-L-methionine is bound by residues 170-171 (GE), serine 202, 224-226 (SLH), and asparagine 302. The active-site S-methylcysteine intermediate is cysteine 345.

Belongs to the radical SAM superfamily. RlmN family. Requires [4Fe-4S] cluster as cofactor.

The protein resides in the cytoplasm. The catalysed reaction is adenosine(2503) in 23S rRNA + 2 reduced [2Fe-2S]-[ferredoxin] + 2 S-adenosyl-L-methionine = 2-methyladenosine(2503) in 23S rRNA + 5'-deoxyadenosine + L-methionine + 2 oxidized [2Fe-2S]-[ferredoxin] + S-adenosyl-L-homocysteine. It catalyses the reaction adenosine(37) in tRNA + 2 reduced [2Fe-2S]-[ferredoxin] + 2 S-adenosyl-L-methionine = 2-methyladenosine(37) in tRNA + 5'-deoxyadenosine + L-methionine + 2 oxidized [2Fe-2S]-[ferredoxin] + S-adenosyl-L-homocysteine. Functionally, specifically methylates position 2 of adenine 2503 in 23S rRNA and position 2 of adenine 37 in tRNAs. m2A2503 modification seems to play a crucial role in the proofreading step occurring at the peptidyl transferase center and thus would serve to optimize ribosomal fidelity. The polypeptide is Dual-specificity RNA methyltransferase RlmN (Pseudomonas fluorescens (strain Pf0-1)).